Here is a 533-residue protein sequence, read N- to C-terminus: (E)-beta-farnesene synthase (533 aa).

Residues Asp-286 and Asp-290 each coordinate Mg(2+). 4 residues coordinate substrate: Asp-286, Asp-290, Arg-427, and Asn-430. The short motif at 286-290 (DDMMD) is the DDXXD motif element. Mg(2+)-binding residues include Asn-430 and Glu-438.

This sequence belongs to the terpene synthase family. As to quaternary structure, monomer. Mg(2+) is required as a cofactor. The cofactor is Mn(2+).

It localises to the cytoplasm. It carries out the reaction (2E,6E)-farnesyl diphosphate = (E)-beta-farnesene + diphosphate. The enzyme catalyses (2E,6E)-farnesyl diphosphate = alpha-copaene + diphosphate. The catalysed reaction is (2E,6E)-farnesyl diphosphate = (1S,5S,6R)-alpha-bergamotene + diphosphate. It catalyses the reaction (2E,6E)-farnesyl diphosphate = (-)-(E)-beta-caryophyllene + diphosphate. It carries out the reaction (2E,6E)-farnesyl diphosphate = delta-cadinene + diphosphate. The enzyme catalyses (2E,6E)-farnesyl diphosphate = (+)-germacrene D + diphosphate. The catalysed reaction is (2E,6E)-farnesyl diphosphate = alpha-zingiberene + diphosphate. It catalyses the reaction (2E,6E)-farnesyl diphosphate = alpha-muurolene + diphosphate. It carries out the reaction (2E,6E)-farnesyl diphosphate = (S)-beta-bisabolene + diphosphate. The enzyme catalyses (2E,6E)-farnesyl diphosphate = beta-sesquiphellandrene + diphosphate. The catalysed reaction is (2E,6E)-farnesyl diphosphate = sesquisabinene A + diphosphate. It participates in secondary metabolite biosynthesis; terpenoid biosynthesis. Functionally, sesquiterpene cyclase catalyzing mainly the production of beta-farnesene and alpha-bergamotene in equal amounts from farnesyl diphosphate. Also mediates the biosynthesis of minor sesquiterpene hydrocarbons including alpha-muurolene, beta-bisabolene, zingiberene, sesquiphellandrene, sesquisabinene A, germacrene D, delta-cadinene, alpha-copaene and (E)-beta-caryophyllene. Involved in indirect defense by producing volatile signals attracting natural enemies of herbivores. In Zea mays (Maize), this protein is (E)-beta-farnesene synthase.